Here is a 333-residue protein sequence, read N- to C-terminus: Thiamine-monophosphate kinase (333 aa).

3 residues coordinate Mg(2+): aspartate 35, threonine 50, and aspartate 51. Histidine 58 serves as a coordination point for substrate. A Mg(2+)-binding site is contributed by aspartate 80. ATP-binding positions include tyrosine 111, 128-129 (GD), and arginine 153. Position 129 (aspartate 129) interacts with Mg(2+). Aspartate 230 is a Mg(2+) binding site. Residue serine 232 coordinates ATP. Residue aspartate 233 participates in Mg(2+) binding. Positions 278 and 330 each coordinate substrate.

Belongs to the thiamine-monophosphate kinase family.

It carries out the reaction thiamine phosphate + ATP = thiamine diphosphate + ADP. It participates in cofactor biosynthesis; thiamine diphosphate biosynthesis; thiamine diphosphate from thiamine phosphate: step 1/1. In terms of biological role, catalyzes the ATP-dependent phosphorylation of thiamine-monophosphate (TMP) to form thiamine-pyrophosphate (TPP), the active form of vitamin B1. The polypeptide is Thiamine-monophosphate kinase (Prochlorococcus marinus (strain SARG / CCMP1375 / SS120)).